Consider the following 153-residue polypeptide: Large ribosomal subunit protein uL22 (153 aa).

The protein belongs to the universal ribosomal protein uL22 family. In terms of assembly, part of the 50S ribosomal subunit.

In terms of biological role, this protein binds specifically to 23S rRNA. It makes multiple contacts with different domains of the 23S rRNA in the assembled 50S subunit and ribosome. Functionally, the globular domain of the protein is located near the polypeptide exit tunnel on the outside of the subunit, while an extended beta-hairpin is found that lines the wall of the exit tunnel in the center of the 70S ribosome. The sequence is that of Large ribosomal subunit protein uL22 from Methanocella arvoryzae (strain DSM 22066 / NBRC 105507 / MRE50).